The following is a 409-amino-acid chain: Elongation factor Tu (409 aa).

A tr-type G domain is found at 10 to 214; that stretch reads KPHVNIGTIG…AVDAYIPTPE (205 aa). Residues 19–26 are G1; the sequence is GHVDHGKT. Residue 19–26 coordinates GTP; that stretch reads GHVDHGKT. Thr26 contacts Mg(2+). Positions 60–64 are G2; sequence GITIN. The interval 81–84 is G3; that stretch reads DCPG. GTP-binding positions include 81-85 and 136-139; these read DCPGH and NKKD. The tract at residues 136–139 is G4; sequence NKKD. The interval 174-176 is G5; the sequence is SAL.

This sequence belongs to the TRAFAC class translation factor GTPase superfamily. Classic translation factor GTPase family. EF-Tu/EF-1A subfamily. In terms of assembly, monomer.

Its subcellular location is the cytoplasm. The enzyme catalyses GTP + H2O = GDP + phosphate + H(+). In terms of biological role, GTP hydrolase that promotes the GTP-dependent binding of aminoacyl-tRNA to the A-site of ribosomes during protein biosynthesis. This chain is Elongation factor Tu, found in Gloeobacter violaceus (strain ATCC 29082 / PCC 7421).